Here is a 162-residue protein sequence, read N- to C-terminus: Iron-sulfur cluster assembly protein IscU (162 aa).

This sequence belongs to the NifU family. Homotrimer. Small proportion is monomeric. Interacts with IscS. Interacts with ABCB6. Component of a complex, at least composed of IscS, Isd11 and IscU. [4Fe-4S] cluster is required as a cofactor.

The protein localises to the mitochondrion. It functions in the pathway cofactor biosynthesis; iron-sulfur cluster biosynthesis. In terms of biological role, participates in iron-sulfur cluster formation (ISC) pathway for iron-sulfur (Fe-S) cluster biogenesis. Plays a role of a major scaffold protein for [Fe-S] assembly; assembles [4Fe-4S] clusters directly upon interaction with the catalytic component IscS-Isd11 as part of the scaffold complex. Can transfer [4Fe-4S] clusters to target apo-proteins. The chain is Iron-sulfur cluster assembly protein IscU from Plasmodium falciparum (isolate 3D7).